We begin with the raw amino-acid sequence, 94 residues long: Co-chaperonin GroES (94 aa).

This sequence belongs to the GroES chaperonin family. In terms of assembly, heptamer of 7 subunits arranged in a ring. Interacts with the chaperonin GroEL.

Its subcellular location is the cytoplasm. In terms of biological role, together with the chaperonin GroEL, plays an essential role in assisting protein folding. The GroEL-GroES system forms a nano-cage that allows encapsulation of the non-native substrate proteins and provides a physical environment optimized to promote and accelerate protein folding. GroES binds to the apical surface of the GroEL ring, thereby capping the opening of the GroEL channel. The polypeptide is Co-chaperonin GroES (Lactococcus lactis subsp. cremoris (strain MG1363)).